A 178-amino-acid polypeptide reads, in one-letter code: ATP synthase subunit delta (178 aa).

This sequence belongs to the ATPase delta chain family. F-type ATPases have 2 components, F(1) - the catalytic core - and F(0) - the membrane proton channel. F(1) has five subunits: alpha(3), beta(3), gamma(1), delta(1), epsilon(1). F(0) has three main subunits: a(1), b(2) and c(10-14). The alpha and beta chains form an alternating ring which encloses part of the gamma chain. F(1) is attached to F(0) by a central stalk formed by the gamma and epsilon chains, while a peripheral stalk is formed by the delta and b chains.

The protein localises to the cell membrane. Functionally, f(1)F(0) ATP synthase produces ATP from ADP in the presence of a proton or sodium gradient. F-type ATPases consist of two structural domains, F(1) containing the extramembraneous catalytic core and F(0) containing the membrane proton channel, linked together by a central stalk and a peripheral stalk. During catalysis, ATP synthesis in the catalytic domain of F(1) is coupled via a rotary mechanism of the central stalk subunits to proton translocation. In terms of biological role, this protein is part of the stalk that links CF(0) to CF(1). It either transmits conformational changes from CF(0) to CF(1) or is implicated in proton conduction. This chain is ATP synthase subunit delta, found in Desulfitobacterium hafniense (strain DSM 10664 / DCB-2).